The primary structure comprises 294 residues: Ribosomal protein L11 methyltransferase (294 aa).

S-adenosyl-L-methionine contacts are provided by T146, G167, D189, and N231.

It belongs to the methyltransferase superfamily. PrmA family.

The protein resides in the cytoplasm. The enzyme catalyses L-lysyl-[protein] + 3 S-adenosyl-L-methionine = N(6),N(6),N(6)-trimethyl-L-lysyl-[protein] + 3 S-adenosyl-L-homocysteine + 3 H(+). Functionally, methylates ribosomal protein L11. The protein is Ribosomal protein L11 methyltransferase of Aliivibrio salmonicida (strain LFI1238) (Vibrio salmonicida (strain LFI1238)).